We begin with the raw amino-acid sequence, 263 residues long: Endonuclease 8 (263 aa).

P2 serves as the catalytic Schiff-base intermediate with DNA. E3 serves as the catalytic Proton donor. Residue K53 is the Proton donor; for beta-elimination activity of the active site. Residues Q70, R125, and N169 each coordinate DNA. The segment at 229–263 (KVFHRDGELCERCGGIIEKTTLSSRPFYWCPGCQH) adopts an FPG-type zinc-finger fold. The active-site Proton donor; for delta-elimination activity is the R253.

The protein belongs to the FPG family. Zn(2+) is required as a cofactor.

It catalyses the reaction 2'-deoxyribonucleotide-(2'-deoxyribose 5'-phosphate)-2'-deoxyribonucleotide-DNA = a 3'-end 2'-deoxyribonucleotide-(2,3-dehydro-2,3-deoxyribose 5'-phosphate)-DNA + a 5'-end 5'-phospho-2'-deoxyribonucleoside-DNA + H(+). Functionally, involved in base excision repair of DNA damaged by oxidation or by mutagenic agents. Acts as a DNA glycosylase that recognizes and removes damaged bases. Has a preference for oxidized pyrimidines, such as thymine glycol, 5,6-dihydrouracil and 5,6-dihydrothymine. Has AP (apurinic/apyrimidinic) lyase activity and introduces nicks in the DNA strand. Cleaves the DNA backbone by beta-delta elimination to generate a single-strand break at the site of the removed base with both 3'- and 5'-phosphates. The chain is Endonuclease 8 from Escherichia coli O7:K1 (strain IAI39 / ExPEC).